The sequence spans 511 residues: 2,3-bisphosphoglycerate-independent phosphoglycerate mutase (511 aa).

Mn(2+) is bound at residue Asp-12. Tyr-36 is modified (phosphotyrosine). Ser-62 contacts Mn(2+). Ser-62 functions as the Phosphoserine intermediate in the catalytic mechanism. Residues His-123, 153–154, Arg-185, Arg-191, 261–264, and Lys-336 contribute to the substrate site; these read RD and RPDR. Asp-403, His-407, Asp-444, His-445, and His-462 together coordinate Mn(2+).

This sequence belongs to the BPG-independent phosphoglycerate mutase family. In terms of assembly, monomer. Requires Mn(2+) as cofactor.

It catalyses the reaction (2R)-2-phosphoglycerate = (2R)-3-phosphoglycerate. It functions in the pathway carbohydrate degradation; glycolysis; pyruvate from D-glyceraldehyde 3-phosphate: step 3/5. Its function is as follows. Catalyzes the interconversion of 2-phosphoglycerate and 3-phosphoglycerate. The protein is 2,3-bisphosphoglycerate-independent phosphoglycerate mutase of Geobacillus kaustophilus (strain HTA426).